The primary structure comprises 123 residues: Large ribosomal subunit protein uL22 (123 aa).

The protein belongs to the universal ribosomal protein uL22 family. Part of the 50S ribosomal subunit.

In terms of biological role, this protein binds specifically to 23S rRNA; its binding is stimulated by other ribosomal proteins, e.g. L4, L17, and L20. It is important during the early stages of 50S assembly. It makes multiple contacts with different domains of the 23S rRNA in the assembled 50S subunit and ribosome. The globular domain of the protein is located near the polypeptide exit tunnel on the outside of the subunit, while an extended beta-hairpin is found that lines the wall of the exit tunnel in the center of the 70S ribosome. The polypeptide is Large ribosomal subunit protein uL22 (Synechococcus sp. (strain JA-3-3Ab) (Cyanobacteria bacterium Yellowstone A-Prime)).